Reading from the N-terminus, the 360-residue chain is Phosphoserine aminotransferase (360 aa).

Residue Arg-42 coordinates L-glutamate. Pyridoxal 5'-phosphate is bound by residues Ala-76 to Ser-77, Trp-102, Thr-152, Asp-172, and Gln-195. Lys-196 bears the N6-(pyridoxal phosphate)lysine mark. Asn-237–Thr-238 contributes to the pyridoxal 5'-phosphate binding site.

It belongs to the class-V pyridoxal-phosphate-dependent aminotransferase family. SerC subfamily. As to quaternary structure, homodimer. Pyridoxal 5'-phosphate is required as a cofactor.

Its subcellular location is the cytoplasm. The enzyme catalyses O-phospho-L-serine + 2-oxoglutarate = 3-phosphooxypyruvate + L-glutamate. It catalyses the reaction 4-(phosphooxy)-L-threonine + 2-oxoglutarate = (R)-3-hydroxy-2-oxo-4-phosphooxybutanoate + L-glutamate. It functions in the pathway amino-acid biosynthesis; L-serine biosynthesis; L-serine from 3-phospho-D-glycerate: step 2/3. Its function is as follows. Catalyzes the reversible conversion of 3-phosphohydroxypyruvate to phosphoserine and of 3-hydroxy-2-oxo-4-phosphonooxybutanoate to phosphohydroxythreonine. This Bacillus cereus (strain ZK / E33L) protein is Phosphoserine aminotransferase.